The sequence spans 250 residues: Agamous-like MADS-box protein AGL8 homolog (250 aa).

Residues 3–57 enclose the MADS-box domain; it reads RGRVQLKRIENKINRQVTFSKRRSGLLKKAHEISVLCDAEVGLIVFSTKGKLFEY. Positions 88 to 178 constitute a K-box domain; sequence PGSWTLENAK…SKKVKEREKE (91 aa). Disordered stretches follow at residues 162–191 and 206–241; these read QEQN…QNHE and PHLG…TVMP. The span at 171 to 180 shows a compositional bias: basic and acidic residues; it reads KVKEREKEVE. Polar residues-rich tracts occupy residues 181–191 and 226–240; these read QQNQWDQQNHE and GNSS…NTVM.

The protein resides in the nucleus. In terms of biological role, probable transcription factor. In Solanum commersonii (Commerson's wild potato), this protein is Agamous-like MADS-box protein AGL8 homolog (SCM1).